The following is a 307-amino-acid chain: Serine/threonine-protein phosphatase PP2A-3 catalytic subunit (307 aa).

Residues aspartate 55, histidine 57, aspartate 83, and asparagine 115 each contribute to the Mn(2+) site. Residue histidine 116 is the Proton donor of the active site. Positions 165 and 239 each coordinate Mn(2+).

This sequence belongs to the PPP phosphatase family. PP-2A subfamily. It depends on Mn(2+) as a cofactor.

It localises to the cytoplasm. The catalysed reaction is O-phospho-L-seryl-[protein] + H2O = L-seryl-[protein] + phosphate. It carries out the reaction O-phospho-L-threonyl-[protein] + H2O = L-threonyl-[protein] + phosphate. This Oryza sativa subsp. indica (Rice) protein is Serine/threonine-protein phosphatase PP2A-3 catalytic subunit (PP2A3).